An 819-amino-acid polypeptide reads, in one-letter code: ATP-dependent DNA helicase PIF4 (819 aa).

A mitochondrion-targeting transit peptide spans 1–84; that stretch reads MLLNSTRTLL…RQASSAGHND (84 aa). The disordered stretch occupies residues 76 to 101; the sequence is QASSAGHNDLGLQEKEKSSGDESAFS. ATP is bound at residue 126-133; sequence GGAGVGKS. The DNA-binding element occupies 734–754; it reads HIIYVAASRVKKFSQLRMINV.

This sequence belongs to the helicase family. PIF1 subfamily. In terms of assembly, monomer. Requires Mg(2+) as cofactor.

The protein resides in the mitochondrion matrix. It is found in the kinetoplast. The enzyme catalyses Couples ATP hydrolysis with the unwinding of duplex DNA at the replication fork by translocating in the 5'-3' direction. This creates two antiparallel DNA single strands (ssDNA). The leading ssDNA polymer is the template for DNA polymerase III holoenzyme which synthesizes a continuous strand.. The catalysed reaction is ATP + H2O = ADP + phosphate + H(+). Functionally, DNA-dependent ATPase and 5'-3' DNA helicase required for the maintenance of mitochondrial (kinetoplast) genome stability. This is ATP-dependent DNA helicase PIF4 from Trypanosoma brucei brucei (strain 927/4 GUTat10.1).